Reading from the N-terminus, the 449-residue chain is Glucose-6-phosphate isomerase (449 aa).

The active-site Proton donor is the glutamate 291. Residues histidine 312 and lysine 426 contribute to the active site.

This sequence belongs to the GPI family.

It is found in the cytoplasm. It catalyses the reaction alpha-D-glucose 6-phosphate = beta-D-fructose 6-phosphate. The protein operates within carbohydrate biosynthesis; gluconeogenesis. It functions in the pathway carbohydrate degradation; glycolysis; D-glyceraldehyde 3-phosphate and glycerone phosphate from D-glucose: step 2/4. Catalyzes the reversible isomerization of glucose-6-phosphate to fructose-6-phosphate. In Streptococcus pyogenes serotype M4 (strain MGAS10750), this protein is Glucose-6-phosphate isomerase.